The chain runs to 67 residues: Systemic RNA interference defective protein 5 (67 aa).

Residues Met1–Asp18 lie on the Extracellular side of the membrane. A helical transmembrane segment spans residues Ile19–Asn39. Residues Arg40–Asp67 lie on the Cytoplasmic side of the membrane.

Ubiquitously present in most tissues tested. Expressed in the somatic cells of intestine, muscle, neurons, somatic gonad and embryos but not in the germline (at protein level).

It localises to the late endosome membrane. Functionally, plays a role in RNA-mediated gene silencing by mediating transport of both ingested and endogenous dsRNA between cells. Not required for the uptake of dsRNA from the intestinal lumen. The chain is Systemic RNA interference defective protein 5 from Caenorhabditis elegans.